The primary structure comprises 642 residues: Threonine--tRNA ligase (642 aa).

The TGS domain maps to 1-65 (MSDIITVTLP…DEDVKLQIFT (65 aa)). Residues 248–541 (DHRKLGKELD…LIEHFAGAFP (294 aa)) are catalytic. Residues Cys342, His393, and His518 each contribute to the Zn(2+) site.

The protein belongs to the class-II aminoacyl-tRNA synthetase family. In terms of assembly, homodimer. Requires Zn(2+) as cofactor.

It is found in the cytoplasm. The catalysed reaction is tRNA(Thr) + L-threonine + ATP = L-threonyl-tRNA(Thr) + AMP + diphosphate + H(+). In terms of biological role, catalyzes the attachment of threonine to tRNA(Thr) in a two-step reaction: L-threonine is first activated by ATP to form Thr-AMP and then transferred to the acceptor end of tRNA(Thr). Also edits incorrectly charged L-seryl-tRNA(Thr). This Myxococcus xanthus (strain DK1622) protein is Threonine--tRNA ligase.